We begin with the raw amino-acid sequence, 328 residues long: E3 ubiquitin-protein ligase SINA-like 5 (328 aa).

The tract at residues 1–77 is disordered; sequence MARSGGNDGH…GSPKSSQPVK (77 aa). 2 stretches are compositionally biased toward acidic residues: residues 10–20 and 27–62; these read HEEELDPELFE and GYED…ENVT. Residues 63 to 77 show a composition bias toward polar residues; that stretch reads TDEQSGSPKSSQPVK. The RING-type; degenerate zinc-finger motif lies at 86–122; it reads CPTCCEPLKRPIYQCSNGHLACSSCCQKLNKKCSFCR. Positions 136 to 324 are SBD; sequence VIEASIVPCP…MQICIAYGYK (189 aa). The segment at 139–197 adopts an SIAH-type; degenerate zinc-finger fold; it reads ASIVPCPNAKHGCKETTTYCNQSSHEKVCKFVRCSCPVSNCNYVSSYSNLKSHACSTAH. Residues Cys-144, Cys-151, His-163, Cys-167, Cys-174, Cys-179, His-191, and His-197 each coordinate Zn(2+).

It belongs to the SINA (Seven in absentia) family.

The enzyme catalyses S-ubiquitinyl-[E2 ubiquitin-conjugating enzyme]-L-cysteine + [acceptor protein]-L-lysine = [E2 ubiquitin-conjugating enzyme]-L-cysteine + N(6)-ubiquitinyl-[acceptor protein]-L-lysine.. Its pathway is protein modification; protein ubiquitination. Its function is as follows. E3 ubiquitin-protein ligase that mediates ubiquitination and subsequent proteasomal degradation of target proteins. E3 ubiquitin ligases accept ubiquitin from an E2 ubiquitin-conjugating enzyme in the form of a thioester and then directly transfers the ubiquitin to targeted substrates. It probably triggers the ubiquitin-mediated degradation of different substrates. This is E3 ubiquitin-protein ligase SINA-like 5 from Arabidopsis thaliana (Mouse-ear cress).